The primary structure comprises 352 residues: tRNA pseudouridine synthase D (352 aa).

Asp-81 acts as the Nucleophile in catalysis. The TRUD domain maps to 158 to 306 (GVPNYFGQQR…RHERRTLLLK (149 aa)).

It belongs to the pseudouridine synthase TruD family.

It carries out the reaction uridine(13) in tRNA = pseudouridine(13) in tRNA. Its function is as follows. Responsible for synthesis of pseudouridine from uracil-13 in transfer RNAs. This chain is tRNA pseudouridine synthase D, found in Photobacterium profundum (strain SS9).